The primary structure comprises 341 residues: GTP 3',8-cyclase (341 aa).

The Radical SAM core domain occupies 11–231 (KRERPLRDLR…DLINQHMPTE (221 aa)). GTP is bound at residue Arg20. [4Fe-4S] cluster contacts are provided by Cys27 and Cys31. Residue Tyr33 coordinates S-adenosyl-L-methionine. Cys34 contacts [4Fe-4S] cluster. Arg75 is a binding site for GTP. Gly79 lines the S-adenosyl-L-methionine pocket. Thr106 is a GTP binding site. Ser130 provides a ligand contact to S-adenosyl-L-methionine. Position 167 (Lys167) interacts with GTP. Met201 provides a ligand contact to S-adenosyl-L-methionine. [4Fe-4S] cluster is bound by residues Cys265 and Cys268. GTP is bound at residue 270–272 (RAR). Cys282 lines the [4Fe-4S] cluster pocket.

It belongs to the radical SAM superfamily. MoaA family. As to quaternary structure, monomer and homodimer. [4Fe-4S] cluster is required as a cofactor.

It catalyses the reaction GTP + AH2 + S-adenosyl-L-methionine = (8S)-3',8-cyclo-7,8-dihydroguanosine 5'-triphosphate + 5'-deoxyadenosine + L-methionine + A + H(+). It functions in the pathway cofactor biosynthesis; molybdopterin biosynthesis. Its function is as follows. Catalyzes the cyclization of GTP to (8S)-3',8-cyclo-7,8-dihydroguanosine 5'-triphosphate. In Bacillus velezensis (strain DSM 23117 / BGSC 10A6 / LMG 26770 / FZB42) (Bacillus amyloliquefaciens subsp. plantarum), this protein is GTP 3',8-cyclase.